Here is a 1067-residue protein sequence, read N- to C-terminus: Mediator of RNA polymerase II transcription subunit 5 (1067 aa).

It belongs to the Mediator complex subunit 5 family. In terms of assembly, component of the Mediator complex.

It localises to the nucleus. Its function is as follows. Component of the Mediator complex, a coactivator involved in the regulated transcription of nearly all RNA polymerase II-dependent genes. Mediator functions as a bridge to convey information from gene-specific regulatory proteins to the basal RNA polymerase II transcription machinery. Mediator is recruited to promoters by direct interactions with regulatory proteins and serves as a scaffold for the assembly of a functional preinitiation complex with RNA polymerase II and the general transcription factors. This Kluyveromyces lactis (strain ATCC 8585 / CBS 2359 / DSM 70799 / NBRC 1267 / NRRL Y-1140 / WM37) (Yeast) protein is Mediator of RNA polymerase II transcription subunit 5 (NUT1).